A 204-amino-acid chain; its full sequence is Adenylyl-sulfate kinase (204 aa).

34 to 41 (GLSGSGKS) serves as a coordination point for ATP. The active-site Phosphoserine intermediate is the S108.

It belongs to the APS kinase family.

It carries out the reaction adenosine 5'-phosphosulfate + ATP = 3'-phosphoadenylyl sulfate + ADP + H(+). It participates in sulfur metabolism; hydrogen sulfide biosynthesis; sulfite from sulfate: step 2/3. Functionally, catalyzes the synthesis of activated sulfate. The chain is Adenylyl-sulfate kinase from Phocaeicola vulgatus (strain ATCC 8482 / DSM 1447 / JCM 5826 / CCUG 4940 / NBRC 14291 / NCTC 11154) (Bacteroides vulgatus).